The following is an 876-amino-acid chain: Probable inactive ATP-dependent zinc metalloprotease FTSHI 2, chloroplastic (876 aa).

Residues 1–20 form a disordered region; it reads MACRFPLHSSSPSQFLSPEN. Residues 1-32 constitute a chloroplast transit peptide; it reads MACRFPLHSSSPSQFLSPENRQRLPRNYPSIS. Positions 8 to 19 are enriched in polar residues; sequence HSSSPSQFLSPE. The helical transmembrane segment at 59–79 threads the bilayer; that stretch reads LLAIPITLTIISASLAKPSFA. Residues 256 to 276 are disordered; sequence TMKAQKKQQERKKRKAVRKKK. Basic residues predominate over residues 258–275; sequence KAQKKQQERKKRKAVRKK. A helical membrane pass occupies residues 304–324; it reads VATALGLVFFYIFYRVVVLNY. A disordered region spans residues 350 to 370; sequence ELEREMEGIEEEDEEVEEGTG. Over residues 357 to 368 the composition is skewed to acidic residues; it reads GIEEEDEEVEEG. 450–457 lines the ATP pocket; that stretch reads GPPGVGKT.

The protein in the N-terminal section; belongs to the AAA ATPase family. In the C-terminal section; belongs to the peptidase M41 family. Homooligomer. Interacts with FtsHi4.

The protein localises to the plastid. It localises to the chloroplast membrane. Functionally, required for plastid development during embryogenesis. Might be involved in chaperone functions or play a structural role in the thylakoid FtsH complex. The polypeptide is Probable inactive ATP-dependent zinc metalloprotease FTSHI 2, chloroplastic (Arabidopsis thaliana (Mouse-ear cress)).